A 356-amino-acid chain; its full sequence is Cytochrome c oxidase subunit 2 (356 aa).

The signal sequence occupies residues 1 to 20 (MVKHWRLILLLALVPLLLSG). C21 carries the N-palmitoyl cysteine lipid modification. A lipid anchor (S-diacylglycerol cysteine) is attached at C21. Topologically, residues 21–47 (CGKPFLSTLKPAGEVADKQYDLTVLST) are extracellular. The tract at residues 21 to 257 (CGKPFLSTLK…KNYKSTAESD (237 aa)) is cytochrome c oxidase subunit II. Residues 48–66 (LIMVVVVAVVSVIFFYVIV) form a helical membrane-spanning segment. Residues 67–87 (RFRRSRVGENTIPKQVEGNKF) lie on the Cytoplasmic side of the membrane. The helical transmembrane segment at 88–106 (LEITWTVIPILLLIILVIP) threads the bilayer. At 107–356 (VVLYTLELAD…YLKGLKAESK (250 aa)) the chain is on the extracellular side. Residues H176, C217, C221, and H225 each contribute to the Cu cation site. Residues 258–356 (LAKQGEELFK…YLKGLKAESK (99 aa)) form the Cytochrome c domain. Residues C271, C274, H275, and M329 each coordinate heme c.

It belongs to the cytochrome c oxidase subunit 2 family. The cofactor is Cu cation. Heme c serves as cofactor.

The protein localises to the cell membrane. It carries out the reaction 4 Fe(II)-[cytochrome c] + O2 + 8 H(+)(in) = 4 Fe(III)-[cytochrome c] + 2 H2O + 4 H(+)(out). Subunits I and II form the functional core of the enzyme complex. Electrons originating in cytochrome c are transferred via heme a and Cu(A) to the binuclear center formed by heme a3 and Cu(B). This is Cytochrome c oxidase subunit 2 (ctaC) from Bacillus subtilis (strain 168).